The sequence spans 446 residues: MSMTPREIVHELNRHIVGQEDAKRAVAIALRNRWRRMQLPAELRAEVTPKNILMIGPTGVGKTEIARRLARLANAPFIKVEATKFTEVGYVGRDVESIIRDLADAAVKMMREQEIQRVRHRAEDAAEDRILDALLPPARQGFGDEPIAREDSNTRQLFRKRLREGQLDDKEIDIEITETPSGVEIMAPPGMEEMTSQLQNLFSSMGKGRKKTHKLKVKDALKLVRDEEAARLVNEEELKARALESVEQNGIVFIDEIDKVAKRANVGGADVSREGVQRDLLPLIEGCTVNTKLGMVKTDHILFIASGAFHLAKPSDLVPELQGRLPIRVELKALTPEDFERILTEPHASLTEQYRELLKTEGLNIQFAADGIKRIAEIAWQVNEKTENIGARRLHTLLERLLEEVSFSAGDLAADHSGQPIVIDAAYVNNHLGELAQDEDLSRYIL.

ATP-binding positions include V17, 59 to 64, D255, E320, and R392; that span reads GVGKTE.

Belongs to the ClpX chaperone family. HslU subfamily. In terms of assembly, a double ring-shaped homohexamer of HslV is capped on each side by a ring-shaped HslU homohexamer. The assembly of the HslU/HslV complex is dependent on binding of ATP.

The protein localises to the cytoplasm. Its function is as follows. ATPase subunit of a proteasome-like degradation complex; this subunit has chaperone activity. The binding of ATP and its subsequent hydrolysis by HslU are essential for unfolding of protein substrates subsequently hydrolyzed by HslV. HslU recognizes the N-terminal part of its protein substrates and unfolds these before they are guided to HslV for hydrolysis. In Azotobacter vinelandii (strain DJ / ATCC BAA-1303), this protein is ATP-dependent protease ATPase subunit HslU.